A 207-amino-acid chain; its full sequence is Uridine kinase (207 aa).

An ATP-binding site is contributed by 13–20 (GASGSGKT).

This sequence belongs to the uridine kinase family.

Its subcellular location is the cytoplasm. It carries out the reaction uridine + ATP = UMP + ADP + H(+). It catalyses the reaction cytidine + ATP = CMP + ADP + H(+). Its pathway is pyrimidine metabolism; CTP biosynthesis via salvage pathway; CTP from cytidine: step 1/3. The protein operates within pyrimidine metabolism; UMP biosynthesis via salvage pathway; UMP from uridine: step 1/1. The chain is Uridine kinase from Ureaplasma parvum serovar 3 (strain ATCC 27815 / 27 / NCTC 11736).